The chain runs to 221 residues: Kinetochore protein Spc25 (221 aa).

The stretch at 63-114 forms a coiled coil; the sequence is VIQRREEMEKRVSFMEELAQEVEATKQRNLVMREQIKQQKMLVRQRKNEIME.

Belongs to the SPC25 family. As to quaternary structure, component of the Ndc80 complex, which is composed of Ndc80, Nuf2 and Spc25.

It localises to the nucleus. It is found in the chromosome. Its subcellular location is the centromere. The protein resides in the kinetochore. Its function is as follows. Acts as a component of the essential kinetochore-associated Ndc80 complex, which is required for chromosome segregation and spindle checkpoint activity during meiosis and mitosis. Required for kinetochore integrity and the organization of stable microtubule binding sites in the outer plate of the kinetochore. Participates in SAC signaling that responds specifically to disruptions in spindle microtubule dynamics. The NDC80 complex synergistically enhances the affinity of the SKA1 complex for microtubules and may allow the NDC80 complex to track depolymerizing microtubules. This Drosophila eugracilis (Fruit fly) protein is Kinetochore protein Spc25.